A 282-amino-acid polypeptide reads, in one-letter code: Large ribosomal subunit protein uL4c (282 aa).

Residues 1–49 (MASSATAPNSLSFFSSSLFLSSSHQIPKTYISVSKLGSGRVSKPLSVSS) constitute a chloroplast transit peptide. The tract at residues 106–138 (EVRGGGIKPYSQKKTGHARRGSQRTPLRPGGGV) is disordered.

It belongs to the universal ribosomal protein uL4 family. Part of the 50S ribosomal subunit.

It localises to the plastid. It is found in the chloroplast. Its function is as follows. This protein binds directly and specifically to 23S rRNA. May play a role in plastid transcriptional regulation. The chain is Large ribosomal subunit protein uL4c (RPL4) from Arabidopsis thaliana (Mouse-ear cress).